A 907-amino-acid chain; its full sequence is Clathrin coat assembly protein AP180 (907 aa).

Residues 14–145 (QYSVTGSAVA…FSYRQMAFDF (132 aa)) enclose the ENTH domain. Disordered stretches follow at residues 285 to 326 (LEGK…DTSP), 342 to 380 (TSKP…TAWG), 393 to 414 (SVPS…PTTT), and 505 to 525 (VPVV…APSP). Phosphoserine is present on residues Ser-296, Ser-300, and Ser-306. Residues 302 to 324 (LSKSSPATTVTSPNSTPAKTIDT) are compositionally biased toward polar residues. Thr-310 carries an O-linked (GlcNAc) threonine glycan. Ser-313 carries the post-translational modification Phosphoserine. Position 317 is a phosphothreonine (Thr-317). The span at 505-515 (VPVVTPTASTA) shows a compositional bias: low complexity. Over residues 516–525 (PPVPATAPSP) the composition is skewed to pro residues. Phosphoserine is present on residues Ser-596, Ser-602, Ser-623, Ser-629, and Ser-763. Arg-865 carries the post-translational modification Asymmetric dimethylarginine; alternate. Arg-865 carries the omega-N-methylarginine; alternate modification. Residues 867–907 (PFGAAAVPGTQLSPSPTPASQSPKKPPAKDPLADLNIKDFL) are disordered. Over residues 893–907 (PAKDPLADLNIKDFL) the composition is skewed to basic and acidic residues.

The protein belongs to the PICALM/SNAP91 family. Binds AP2A2. Interacts with AP2B1; clathrin competes with SNAP91. In terms of processing, thr-310 can be modified by the addition of N-acetylglucosamine which can be further phosphorylated. There is no evidence for direct Thr-310 phosphorylation.

Its subcellular location is the cell membrane. The protein localises to the membrane. It localises to the coated pit. In terms of biological role, adaptins are components of the adapter complexes which link clathrin to receptors in coated vesicles. Clathrin-associated protein complexes are believed to interact with the cytoplasmic tails of membrane proteins, leading to their selection and concentration. Binding of AP180 to clathrin triskelia induces their assembly into 60-70 nm coats. The protein is Clathrin coat assembly protein AP180 (SNAP91) of Homo sapiens (Human).